The following is an 801-amino-acid chain: Phenylalanine--tRNA ligase beta subunit (801 aa).

Residues 39 to 154 (LKMPQKVVVG…GHLELGVELG (116 aa)) form the tRNA-binding domain. The B5 domain maps to 398–475 (IDEITIKTTF…RIYGIDNVSS (78 aa)). Residues Asp453, Asp459, Glu462, and Glu463 each contribute to the Mg(2+) site. Residues 708–800 (SKYQKSTRDL…LVREFDAVLR (93 aa)) form the FDX-ACB domain.

It belongs to the phenylalanyl-tRNA synthetase beta subunit family. Type 1 subfamily. In terms of assembly, tetramer of two alpha and two beta subunits. It depends on Mg(2+) as a cofactor.

It is found in the cytoplasm. It carries out the reaction tRNA(Phe) + L-phenylalanine + ATP = L-phenylalanyl-tRNA(Phe) + AMP + diphosphate + H(+). This Helicobacter hepaticus (strain ATCC 51449 / 3B1) protein is Phenylalanine--tRNA ligase beta subunit.